We begin with the raw amino-acid sequence, 213 residues long: Pyrrolidone-carboxylate peptidase (213 aa).

Catalysis depends on residues Glu-78, Cys-141, and His-165.

Belongs to the peptidase C15 family. Homotetramer.

It is found in the cytoplasm. The enzyme catalyses Release of an N-terminal pyroglutamyl group from a polypeptide, the second amino acid generally not being Pro.. Its function is as follows. Removes 5-oxoproline from various penultimate amino acid residues except L-proline. The protein is Pyrrolidone-carboxylate peptidase of Clostridium botulinum (strain Alaska E43 / Type E3).